Consider the following 153-residue polypeptide: NAD(P)H-quinone oxidoreductase subunit N (153 aa).

The protein belongs to the complex I NdhN subunit family. In terms of assembly, NDH-1 can be composed of about 15 different subunits; different subcomplexes with different compositions have been identified which probably have different functions.

The protein localises to the cellular thylakoid membrane. The enzyme catalyses a plastoquinone + NADH + (n+1) H(+)(in) = a plastoquinol + NAD(+) + n H(+)(out). It carries out the reaction a plastoquinone + NADPH + (n+1) H(+)(in) = a plastoquinol + NADP(+) + n H(+)(out). Functionally, NDH-1 shuttles electrons from an unknown electron donor, via FMN and iron-sulfur (Fe-S) centers, to quinones in the respiratory and/or the photosynthetic chain. The immediate electron acceptor for the enzyme in this species is believed to be plastoquinone. Couples the redox reaction to proton translocation, and thus conserves the redox energy in a proton gradient. Cyanobacterial NDH-1 also plays a role in inorganic carbon-concentration. This chain is NAD(P)H-quinone oxidoreductase subunit N, found in Synechococcus sp. (strain CC9311).